Reading from the N-terminus, the 392-residue chain is Stilbene synthase 4 (392 aa).

55-58 (KFNR) provides a ligand contact to substrate. Cysteine 164 is an active-site residue. Substrate contacts are provided by residues leucine 267 and 305 to 307 (GGP).

It belongs to the thiolase-like superfamily. Chalcone/stilbene synthases family. As to quaternary structure, homodimer.

The protein localises to the cytoplasm. The catalysed reaction is 4-coumaroyl-CoA + 3 malonyl-CoA + 3 H(+) = trans-resveratrol + 4 CO2 + 4 CoA. Its pathway is phytoalexin biosynthesis; 3,4',5-trihydroxystilbene biosynthesis; 3,4',5-trihydroxystilbene from trans-4-coumarate: step 2/2. Mediates resistance to pathogens which are sensitive to stilbenes. In Vitis vinifera (Grape), this protein is Stilbene synthase 4.